A 453-amino-acid polypeptide reads, in one-letter code: V-type proton ATPase subunit B (453 aa).

Arg-341 contributes to the ATP binding site.

Belongs to the ATPase alpha/beta chains family. V-ATPase is a heteromultimeric enzyme made up of two complexes: the ATP-hydrolytic V1 complex and the proton translocation V0 complex. The V1 complex consists of three catalytic AB heterodimers that form a heterohexamer, three peripheral stalks each consisting of EG heterodimers, one central rotor including subunits D and F, and the regulatory subunits C and H. The proton translocation complex V0 consists of the proton transport subunit a, a ring of proteolipid subunits c9c'', rotary subunit d, subunits e and f, and two accessory subunits.

Its function is as follows. Non-catalytic subunit of the V1 complex of vacuolar(H+)-ATPase (V-ATPase), a multisubunit enzyme composed of a peripheral complex (V1) that hydrolyzes ATP and a membrane integral complex (V0) that translocates protons. V-ATPase is responsible for acidifying and maintaining the pH of intracellular compartments and in some cell types, is targeted to the plasma membrane, where it is responsible for acidifying the extracellular environment. Essential for the proper assembly and activity of V-ATPase. This Gallus gallus (Chicken) protein is V-type proton ATPase subunit B (ATP6V1B).